Consider the following 440-residue polypeptide: Adenosylhomocysteinase (440 aa).

Substrate-binding residues include threonine 64, aspartate 139, and glutamate 164. 165-167 provides a ligand contact to NAD(+); that stretch reads TTT. Lysine 194 and aspartate 198 together coordinate substrate. NAD(+)-binding positions include asparagine 199, 228–233, glutamate 251, asparagine 286, 307–309, and asparagine 352; these read GFGDVG and IGH.

The protein belongs to the adenosylhomocysteinase family. The cofactor is NAD(+).

It is found in the cytoplasm. It catalyses the reaction S-adenosyl-L-homocysteine + H2O = L-homocysteine + adenosine. The protein operates within amino-acid biosynthesis; L-homocysteine biosynthesis; L-homocysteine from S-adenosyl-L-homocysteine: step 1/1. Functionally, may play a key role in the regulation of the intracellular concentration of adenosylhomocysteine. This Granulibacter bethesdensis (strain ATCC BAA-1260 / CGDNIH1) protein is Adenosylhomocysteinase.